The primary structure comprises 254 residues: MRTPLLAGNWKMYKTTGEARELVEGLLHGLGDVSDRKVLVCPPFTALHTVRDLVQGTPIALGAQDVYIEPQGAFTGAISPVMLRDLGCTYVIVGHSERRAIFGEGDELIGKKVRAALAHDLTPILCVGETKPQRDAGEAETIVVAQVRAALAGMTPDQIARIVIAYEPVWAIGTGDTATPADAQAMHVTIRQTLGELAGSDVADAINILYGGSVKPDNIDDLMAQPDIDGALVGGASLKADSFLRIVHFLPIQG.

Residue 9–11 (NWK) participates in substrate binding. H95 serves as the catalytic Electrophile. The active-site Proton acceptor is E167. Substrate-binding positions include G173, S213, and 234 to 235 (GG).

Belongs to the triosephosphate isomerase family. As to quaternary structure, homodimer.

It localises to the cytoplasm. The enzyme catalyses D-glyceraldehyde 3-phosphate = dihydroxyacetone phosphate. It functions in the pathway carbohydrate biosynthesis; gluconeogenesis. It participates in carbohydrate degradation; glycolysis; D-glyceraldehyde 3-phosphate from glycerone phosphate: step 1/1. Involved in the gluconeogenesis. Catalyzes stereospecifically the conversion of dihydroxyacetone phosphate (DHAP) to D-glyceraldehyde-3-phosphate (G3P). This chain is Triosephosphate isomerase, found in Roseiflexus sp. (strain RS-1).